Reading from the N-terminus, the 646-residue chain is Macrolide export ATP-binding/permease protein MacB (646 aa).

The ABC transporter domain occupies 5–243; that stretch reads IELKGVSRTY…TLPKTNRIRQ (239 aa). 41 to 48 contributes to the ATP binding site; the sequence is GASGSGKS. Helical transmembrane passes span 272–292, 518–538, 570–590, and 611–631; these read TLTM…VALG, FSIL…IGVM, IIEA…LSYI, and AAVA…YLPA.

Belongs to the ABC transporter superfamily. Macrolide exporter (TC 3.A.1.122) family. Homodimer. Part of the tripartite efflux system MacAB-TolC, which is composed of an inner membrane transporter, MacB, a periplasmic membrane fusion protein, MacA, and an outer membrane component, TolC. The complex forms a large protein conduit and can translocate molecules across both the inner and outer membranes. Interacts with MacA.

It is found in the cell inner membrane. Its function is as follows. Part of the tripartite efflux system MacAB-TolC. MacB is a non-canonical ABC transporter that contains transmembrane domains (TMD), which form a pore in the inner membrane, and an ATP-binding domain (NBD), which is responsible for energy generation. Confers resistance against macrolides. This Escherichia coli protein is Macrolide export ATP-binding/permease protein MacB.